The chain runs to 662 residues: DNA ligase (662 aa).

Residues 31–35 (DKDYD) and 79–80 (SL) contribute to the NAD(+) site. Lys121 serves as the catalytic N6-AMP-lysine intermediate. Positions 143, 177, and 313 each coordinate NAD(+). Zn(2+)-binding residues include Cys406, Cys409, Cys422, and Cys428. Residues 586–662 (VLESPFMGKT…LSEEEFENMI (77 aa)) enclose the BRCT domain.

It belongs to the NAD-dependent DNA ligase family. LigA subfamily. Requires Mg(2+) as cofactor. It depends on Mn(2+) as a cofactor.

The enzyme catalyses NAD(+) + (deoxyribonucleotide)n-3'-hydroxyl + 5'-phospho-(deoxyribonucleotide)m = (deoxyribonucleotide)n+m + AMP + beta-nicotinamide D-nucleotide.. DNA ligase that catalyzes the formation of phosphodiester linkages between 5'-phosphoryl and 3'-hydroxyl groups in double-stranded DNA using NAD as a coenzyme and as the energy source for the reaction. It is essential for DNA replication and repair of damaged DNA. This Clostridium perfringens (strain ATCC 13124 / DSM 756 / JCM 1290 / NCIMB 6125 / NCTC 8237 / Type A) protein is DNA ligase.